The following is a 286-amino-acid chain: Protein WVD2-like 1 (286 aa).

The disordered stretch occupies residues 31 to 101; that stretch reads ETDEEFEVKE…ENKKHIDDED (71 aa). Thr32 carries the post-translational modification Phosphothreonine. The segment covering 38-47 has biased composition (basic and acidic residues); the sequence is VKECTEEKSL. A coiled-coil region spans residues 131–182; sequence AQRAEKRKEYYQKLEEKNQALEAERNELEQRQKDEQEAALKQLRKNLKFKAK. Positions 186-286 are disordered; it reads NFYYEAPPAK…KPVNESSEEA (101 aa). Residues 234–247 are compositionally biased toward polar residues; sequence TVSNRNRHSTGTVQ.

The protein belongs to the TPX2 family.

It localises to the cytoplasm. It is found in the cytoskeleton. In terms of biological role, microtubule-associated protein (MAP) that regulates the orientation of interphase cortical microtubules. Modulates both rotational polarity and anisotropic cell expansion during organ growth. Promotes clockwise root and etiolated hypocotyls coiling, clockwise leaf curling, but left-handed petiole twisting. The protein is Protein WVD2-like 1 (WDL1) of Arabidopsis thaliana (Mouse-ear cress).